The chain runs to 604 residues: Protein TAX4 (604 aa).

Disordered stretches follow at residues 38-77 (HPNGNAGSAERPRHLKVESAPVVKSEPSLPRMRQPEPRSI), 132-249 (SFSN…RQQE), 267-299 (GTLPDLIPRSQRKTSKPRFKHRLLRSPEQQQEN), 338-380 (DETF…KGLK), and 394-428 (PFPHHHHHHHQLHNPNSHHLHTHHHTSSHKFNEDK). Residues 176–185 (YDNNVRSRSI) show a composition bias toward polar residues. 2 stretches are compositionally biased toward low complexity: residues 186–203 (SPQVSYSTSLSSSCSISS) and 224–240 (SMSSYSLASKASAKASL). Composition is skewed to basic residues over residues 276-290 (SQRKTSKPRFKHRLL), 366-379 (KKKKSRRSKIKKGL), and 396-421 (PHHHHHHHQLHNPNSHHLHTHHHTSS). Residues 469 to 559 (ANEDDESHLQ…RVWNSVDGYV (91 aa)) enclose the EH domain.

Belongs to the IRS4 family. Interacts with INP51.

In terms of biological role, with IRS4, acts as a positive regulator of INP51 activity and phosphatidylinositol 4,5-bisphosphate turnover. Negatively regulates signaling through the cell integrity pathway, including the MAP kinase SLT2. The chain is Protein TAX4 (TAX4) from Saccharomyces cerevisiae (strain ATCC 204508 / S288c) (Baker's yeast).